A 252-amino-acid chain; its full sequence is 3-dehydroquinate dehydratase (252 aa).

3-dehydroquinate is bound by residues Ser21, 46-48, and Arg82; that span reads EWR. His143 (proton donor/acceptor) is an active-site residue. Catalysis depends on Lys170, which acts as the Schiff-base intermediate with substrate. 3-dehydroquinate-binding residues include Arg213, Ser232, and Gln236.

It belongs to the type-I 3-dehydroquinase family. Homodimer.

It carries out the reaction 3-dehydroquinate = 3-dehydroshikimate + H2O. It participates in metabolic intermediate biosynthesis; chorismate biosynthesis; chorismate from D-erythrose 4-phosphate and phosphoenolpyruvate: step 3/7. In terms of biological role, involved in the third step of the chorismate pathway, which leads to the biosynthesis of aromatic amino acids. Catalyzes the cis-dehydration of 3-dehydroquinate (DHQ) and introduces the first double bond of the aromatic ring to yield 3-dehydroshikimate. The protein is 3-dehydroquinate dehydratase of Salmonella paratyphi A (strain ATCC 9150 / SARB42).